The chain runs to 521 residues: GMP synthase [glutamine-hydrolyzing] (521 aa).

Positions 8-203 constitute a Glutamine amidotransferase type-1 domain; the sequence is KILILDFGAQ…VVDVCGCQTL (196 aa). Catalysis depends on Cys85, which acts as the Nucleophile. Active-site residues include His177 and Glu179. The region spanning 204–396 is the GMPS ATP-PPase domain; it reads WTAANIIEDQ…LGLPRTMVYR (193 aa). 231 to 237 serves as a coordination point for ATP; the sequence is SGGVDSS.

In terms of assembly, homodimer.

The catalysed reaction is XMP + L-glutamine + ATP + H2O = GMP + L-glutamate + AMP + diphosphate + 2 H(+). Its pathway is purine metabolism; GMP biosynthesis; GMP from XMP (L-Gln route): step 1/1. Functionally, catalyzes the synthesis of GMP from XMP. This chain is GMP synthase [glutamine-hydrolyzing], found in Xanthomonas axonopodis pv. citri (strain 306).